Consider the following 294-residue polypeptide: Ankyrin repeat and SOCS box protein 9 (294 aa).

Residue M1 is modified to N-acetylmethionine. ANK repeat units lie at residues 35–64 (SDWS…AVNI), 68–97 (DHVS…QVNG), 101–130 (DWHT…SVQP), 133–162 (DLAS…NIDH), 166–195 (HLGT…DVNQ), and 198–227 (GQDS…DTQA). A Phosphoserine modification is found at S51. The region spanning 240–294 (PPESPLAQLFLEREGPPSLMQLCRLRIRKCFGIQQHHKITKLVLPEDLKQFLLHL) is the SOCS box domain.

The protein belongs to the ankyrin SOCS box (ASB) family. In terms of assembly, substrate-recognition component of the ECS(ASB9) complex, composed of ASB9, CUL5, ELOB, ELOC and RNF7/RBX2. In terms of tissue distribution, predominantly expressed in testis, kidney, and liver.

The protein localises to the mitochondrion. It participates in protein modification; protein ubiquitination. Functionally, substrate-recognition component of a cullin-5-RING E3 ubiquitin-protein ligase complex (ECS complex, also named CRL5 complex), which mediates the ubiquitination and subsequent proteasomal degradation of target proteins. The ECS(ASB9) complex catalyzes ubiquitination of creatine kinases CKB and CKMT1A. In terms of biological role, does not interact with the Elongin BC complex, likely to be a negative regulator of isoform 1. The chain is Ankyrin repeat and SOCS box protein 9 from Homo sapiens (Human).